The chain runs to 238 residues: Purine nucleoside phosphorylase DeoD-type (238 aa).

Histidine 4 serves as a coordination point for a purine D-ribonucleoside. Phosphate-binding positions include glycine 20, arginine 24, arginine 43, and 87–90 (RVGS). Residues 179–181 (EME) and 203–204 (SD) each bind a purine D-ribonucleoside. The active-site Proton donor is the aspartate 204.

This sequence belongs to the PNP/UDP phosphorylase family. As to quaternary structure, homohexamer; trimer of homodimers.

The catalysed reaction is a purine D-ribonucleoside + phosphate = a purine nucleobase + alpha-D-ribose 1-phosphate. It catalyses the reaction a purine 2'-deoxy-D-ribonucleoside + phosphate = a purine nucleobase + 2-deoxy-alpha-D-ribose 1-phosphate. Its function is as follows. Catalyzes the reversible phosphorolytic breakdown of the N-glycosidic bond in the beta-(deoxy)ribonucleoside molecules, with the formation of the corresponding free purine bases and pentose-1-phosphate. This chain is Purine nucleoside phosphorylase DeoD-type, found in Mannheimia succiniciproducens (strain KCTC 0769BP / MBEL55E).